The following is a 270-amino-acid chain: Chromo domain-containing protein cec-4 (270 aa).

Disordered stretches follow at residues 1–24 (MAKK…ETSK) and 143–229 (KIAQ…KNDV). One can recognise a Chromo domain in the interval 87–147 (YAVERVLAHR…HQEDLKIAQT (61 aa)). 2 stretches are compositionally biased toward basic residues: residues 151 to 167 (TPSK…KRRA) and 187 to 197 (TPKQSTKKLKR). A compositionally biased stretch (basic and acidic residues) spans 205–229 (LVEKSKKKAIPDLENHTLDQEKNDV).

As to quaternary structure, interacts with mono-, di- and tri-methylated 'Lys-9' residues on histone H3. Weakly interacts with methylated 'Lys-37' residues on histone H3.

It localises to the nucleus inner membrane. The protein localises to the membrane. Its function is as follows. Chromatin anchor protein which binds to methylated lysine residues on histone H3, thereby recruiting heterochromatin to the nuclear periphery, especially in embryonic cells, with a lesser role in differentiated cells. May be required for the correct positioning of chromatin and nucleoli in embryos. This is Chromo domain-containing protein cec-4 from Caenorhabditis elegans.